The following is a 313-amino-acid chain: Tyrosine recombinase XerC (313 aa).

The region spanning 1-85 (MNDQVEAFLR…AVKSFFAFLT (85 aa)) is the Core-binding (CB) domain. Residues 106–291 (DLPRALTPHQ…NHASSAQPVR (186 aa)) form the Tyr recombinase domain. Active-site residues include Arg-147, Lys-171, His-243, Arg-246, and His-269. The active-site O-(3'-phospho-DNA)-tyrosine intermediate is the Tyr-278.

The protein belongs to the 'phage' integrase family. XerC subfamily. As to quaternary structure, forms a cyclic heterotetrameric complex composed of two molecules of XerC and two molecules of XerD.

It is found in the cytoplasm. In terms of biological role, site-specific tyrosine recombinase, which acts by catalyzing the cutting and rejoining of the recombining DNA molecules. The XerC-XerD complex is essential to convert dimers of the bacterial chromosome into monomers to permit their segregation at cell division. It also contributes to the segregational stability of plasmids. This is Tyrosine recombinase XerC from Roseiflexus sp. (strain RS-1).